Consider the following 207-residue polypeptide: MTSPAPTIGVLALQGDVREHVAALEAGGARAVTVRRVAELRGVDGLVLPGGESTTIDRLLRVFELREVLRERIAEGLPVYGSCAGMILLADRVLDGAPDQQTLGGLDVTVRRNAFGRQVDSWEEDLPLPEITRGGPPVEGIFIRAPWVEEAGEEVRVLARLGSGPAAGRIVAVRQGDLLATSFHPEITGDDRVHRYFVDVVRERVAG.

L-glutamine is bound at residue 51–53; it reads GES. The Nucleophile role is filled by cysteine 83. L-glutamine contacts are provided by residues arginine 112 and 143 to 144; that span reads IR. Residues histidine 184 and glutamate 186 each act as charge relay system in the active site.

It belongs to the glutaminase PdxT/SNO family. In terms of assembly, in the presence of PdxS, forms a dodecamer of heterodimers. Only shows activity in the heterodimer.

The enzyme catalyses aldehydo-D-ribose 5-phosphate + D-glyceraldehyde 3-phosphate + L-glutamine = pyridoxal 5'-phosphate + L-glutamate + phosphate + 3 H2O + H(+). It carries out the reaction L-glutamine + H2O = L-glutamate + NH4(+). It participates in cofactor biosynthesis; pyridoxal 5'-phosphate biosynthesis. Functionally, catalyzes the hydrolysis of glutamine to glutamate and ammonia as part of the biosynthesis of pyridoxal 5'-phosphate. The resulting ammonia molecule is channeled to the active site of PdxS. In Kineococcus radiotolerans (strain ATCC BAA-149 / DSM 14245 / SRS30216), this protein is Pyridoxal 5'-phosphate synthase subunit PdxT.